A 452-amino-acid chain; its full sequence is Maltoporin (452 aa).

A signal peptide spans 1-25; that stretch reads MMITLRKLPLAVAVAAGVMSAQAMA.

This sequence belongs to the porin LamB (TC 1.B.3) family. Homotrimer formed of three 18-stranded antiparallel beta-barrels, containing three independent channels.

It is found in the cell outer membrane. It carries out the reaction beta-maltose(in) = beta-maltose(out). Involved in the transport of maltose and maltodextrins. This Salmonella enteritidis PT4 (strain P125109) protein is Maltoporin.